Reading from the N-terminus, the 217-residue chain is Dephospho-CoA kinase (217 aa).

Positions 4–203 (IVALTGGISS…SHLSRIYNKN (200 aa)) constitute a DPCK domain. An ATP-binding site is contributed by 12–17 (SSGKTT).

It belongs to the CoaE family.

It is found in the cytoplasm. The catalysed reaction is 3'-dephospho-CoA + ATP = ADP + CoA + H(+). It participates in cofactor biosynthesis; coenzyme A biosynthesis; CoA from (R)-pantothenate: step 5/5. Catalyzes the phosphorylation of the 3'-hydroxyl group of dephosphocoenzyme A to form coenzyme A. The protein is Dephospho-CoA kinase of Buchnera aphidicola subsp. Acyrthosiphon pisum (strain APS) (Acyrthosiphon pisum symbiotic bacterium).